Consider the following 95-residue polypeptide: Integration host factor subunit beta (95 aa).

It belongs to the bacterial histone-like protein family. In terms of assembly, heterodimer of an alpha and a beta chain.

In terms of biological role, this protein is one of the two subunits of integration host factor, a specific DNA-binding protein that functions in genetic recombination as well as in transcriptional and translational control. This chain is Integration host factor subunit beta, found in Erwinia tasmaniensis (strain DSM 17950 / CFBP 7177 / CIP 109463 / NCPPB 4357 / Et1/99).